The sequence spans 1657 residues: MASKQAKRKEVHRINSAHGSDKSKDLYHFGSNVPPGSFEQKKGKFPIWPEWSEADINAEKWDAGKGGKEKDKTAKSPIFHFFEDPEGKIELPQSLKVFSWKRPQDFIFSRTPVVVKNEITFDLFSPNEHLLCSELMRWIISEIYAVWKIFNGGILSNYHKGNLGELPILPWKPWEHIYSLCKAVKGHVPLFNSYGKYVVKLYWMGCWRKITVDDFLPFDEENNLLLPATSYEFELWPMLLSKAIIKLANVDVHVAHRRELGELTVIHALTGWLPEVIPLHPAYVDRVWELLKEILPEFKLTEEPSSESKITTIDNKLKEATKENKDGKDGKNGKDLKDGKDMKDGKDGKDGKDGKDGKDGKDEKADARDLGKKNKKDGEKEKEKFKFSLHGSRPSSDVQYSMQSLSECSSAIQLPHMVVYATFTPLYLFENKIFSLEKMANSAEKLREYGLSHICSHPVLVTRSRSCPLVSPPKPPPLPAWKLIRHKKETVITDEAQDAVPKKPEQFLEISSPFLNYRMTPFTIPTETHFVQSVIKKGTPLGSSLPPLVENDLVASTSQGEMSIVNGNQSQGNIALQITLGKDEPSEPALADFHQLEATSLDRDLISLTTATLDKSQEELAINEGVAKEIWLDFEDFCVCFHHIYIFHKPHSYCLNFQKSEFKFVEERVPYYLFVDSLKPIELLVCFSALVRWGESGALTKDSPPVEPGLLTAEAITWKSLKPLSVVLRIHTYATKASVVRLPAGRHMLLFNAYSPVGHAIHVCSMTTFVIGDEDIVLPNFEPESYRFTEQSIIIMKAIGNVIANFKDKGKLPAALRDLQAAHYPIPLNNKELTAQHFRVFHISLWRLMKKSQVAKPPSNFKFAFRAMVFDTDLLDSFSEDVSLAEWVDLKYSTPINEKEYTSEEIAAAVKIQSMWKGCYVRLLMKARKPETKENVTVADTLQKIWAVLEMNLEQYALSLLRLMFKSKCKSMESYPCYQDEETKLAFADHTVNYADQPPNSWFIVFREIFLVPQDMIILPKVYTTLPICILHVINNDTLEQVPKVFQKVVPFLYTKNKKGYTFVAEAYTGDTFVSGARWKLRLIGSYNPLPFLARDSPCNTFSIKEIRDYYIPNDRKILFRYSIKVTVAQSITIQVRTSKPDTFIKLQVLESEEVITSTVGKGQAVIPAFYFLGNEKALSSQSSKQVLLSHPSPKKDPEVLTKKKSGQPGQKSFKGRSGGGLTDTGMPLLEEEILNIPTLEENSSTPQQCYKYIIQCLVLFNSWPLNETQLTFVQALKDMEKMDIKEKHEEPAPMGSPDSHAVSEGQKSVGVPKTTRKGKEKSAEKEKLAKEKQAPRFEPQQVQMPTAVHSQQEDPNKPYWILRLVSEHTDSDYVDVKKDTERADEIRAMKQAWETTEPGRAIKAAQARLKYLTQFIKKPVTTDTTTSAPSPETLSVSQSQTKSSEEGELDTGKYADIKELPPNAAGSVLWKKWQMTKTITSLTKFTSSESVPKEEPPQKEIPVVRQRSPTILETSPQQIRKALEFLDFSHYVRKTAAEAVLQTEELNKQQAMQKAEEIHQFRQHRSRILSIRDIDQEERFKQKDEVLEMYGEMRDSVDEARQKILDIREVYRNKLLEAERLRMEALAAQEAAVKIEIEKKSPASDSQKKKKVGKKK.

Positions 1–11 (MASKQAKRKEV) are enriched in basic residues. Disordered regions lie at residues 1–40 (MASKQAKRKEVHRINSAHGSDKSKDLYHFGSNVPPGSFEQ) and 321–398 (TKEN…SSDV). Residues 70–402 (KDKTAKSPIF…RPSSDVQYSM (333 aa)) enclose the Calpain catalytic domain. Over residues 321-386 (TKENKDGKDG…DGEKEKEKFK (66 aa)) the composition is skewed to basic and acidic residues. In terms of domain architecture, Globin; C-terminal part spans 762-889 (HVCSMTTFVI…EDVSLAEWVD (128 aa)). Residues Q791 and H823 each contribute to the heme b site. Positions 905 to 934 (EIAAAVKIQSMWKGCYVRLLMKARKPETKE) constitute an IQ domain. Positions 935 to 967 (NVTVADTLQKIWAVLEMNLEQYALSLLRLMFKS) constitute a Globin; N-terminal part domain. Disordered regions lie at residues 1184–1226 (SKQV…TDTG), 1288–1356 (KHEE…QEDP), 1422–1459 (TTDTTTSAPSPETLSVSQSQTKSSEEGELDTGKYADIK), and 1638–1657 (IEKKSPASDSQKKKKVGKKK). Basic and acidic residues predominate over residues 1321 to 1336 (EKSAEKEKLAKEKQAP). 2 stretches are compositionally biased toward polar residues: residues 1341-1351 (QQVQMPTAVHS) and 1422-1443 (TTDTTTSAPSPETLSVSQSQTK). Positions 1585 to 1640 (DEVLEMYGEMRDSVDEARQKILDIREVYRNKLLEAERLRMEALAAQEAAVKIEIEK) form a coiled coil.

In the central section; belongs to the globin family. The protein in the N-terminal section; belongs to the peptidase C2 family. As to quaternary structure, interacts with septin SEPT10; contributes to in vitro proteolytic cleavage of SEPT10 in a calmodulin-dependent manner. Interacts with CFAP69. Interacts with SPEF2. May interact with calmodulin. In terms of tissue distribution, strongly expressed in testis and lung. Weakly expressed in heart, brain, spleen, kidney and tongue.

It localises to the cell projection. The protein localises to the cilium. Its subcellular location is the flagellum. Its function is as follows. Probable chimeric globin with a bis-histidyl six-coordinate heme-iron atom through which it could bind dioxygen, carbon monoxide and nitric oxide. Required for sperm flagellum formation and maturation of elongating spermatids, thus playing an essential role in male fertility. In Mus musculus (Mouse), this protein is Androglobin.